We begin with the raw amino-acid sequence, 340 residues long: Tetraacyldisaccharide 4'-kinase (340 aa).

51-58 (HMGGAGKT) is an ATP binding site.

Belongs to the LpxK family.

It catalyses the reaction a lipid A disaccharide + ATP = a lipid IVA + ADP + H(+). It participates in glycolipid biosynthesis; lipid IV(A) biosynthesis; lipid IV(A) from (3R)-3-hydroxytetradecanoyl-[acyl-carrier-protein] and UDP-N-acetyl-alpha-D-glucosamine: step 6/6. In terms of biological role, transfers the gamma-phosphate of ATP to the 4'-position of a tetraacyldisaccharide 1-phosphate intermediate (termed DS-1-P) to form tetraacyldisaccharide 1,4'-bis-phosphate (lipid IVA). This chain is Tetraacyldisaccharide 4'-kinase, found in Rhodopseudomonas palustris (strain TIE-1).